Here is a 324-residue protein sequence, read N- to C-terminus: PGR5-like protein 1A, chloroplastic (324 aa).

The N-terminal 60 residues, 1–60, are a transit peptide targeting the chloroplast; it reads MGSKMLFSLTSPRLFSAVSRKPSSSFSPSPPSPSSRTQWTQLSPGKSISLRRRVFLLPAK. Residues 16–42 are disordered; that stretch reads SAVSRKPSSSFSPSPPSPSSRTQWTQL. The Stromal segment spans residues 61-198; sequence ATTEQSGPVG…KVYSDLAVDY (138 aa). The cysteines at positions 82 and 183 are disulfide-linked. A helical membrane pass occupies residues 199–219; that stretch reads FKMLLLNVPATVVALGLFFFL. The Lumenal, thylakoid segment spans residues 220–236; that stretch reads DDITGFEITYIMELPEP. The chain crosses the membrane as a helical span at residues 237–257; the sequence is YSFIFTWFAAVPVIVYLALSI. The Stromal segment spans residues 258–324; it reads TKLIIKDFLI…LITLPEGSQA (67 aa).

This sequence belongs to the PGR5 family. As to quaternary structure, homodimer and heterodimer with PGR5. Interacts with PGR5, FD2, petC, psaD1, LFNR1 and LFNR2. Also interacts with a Fe-containing cofactor (FCC). Disulfide bonds; Cys-300 and Cys-303 are probably involved in the formation of disulfide bridges with 'Cys-11' and 'Cys-105' of PGR5 while Cys-272 and Cys-275 are probably involved in the binding of a Fe-containing cofactor (FCC).

The protein localises to the plastid. It is found in the chloroplast thylakoid membrane. Its activity is regulated as follows. Inhibited by antimycin A. Its function is as follows. Ferredoxin-plastoquinone reductase involved in cyclic electron flow (CEF) around photosystem I. The homodimer is probably not involved in CEF. This is PGR5-like protein 1A, chloroplastic (PGRL1A) from Arabidopsis thaliana (Mouse-ear cress).